The following is a 36-amino-acid chain: Photosystem I reaction center subunit VIII (36 aa).

A helical membrane pass occupies residues 9-29 (ILVPLVGLIFPALSMALLFIY).

This sequence belongs to the PsaI family.

It localises to the plastid. The protein resides in the chloroplast thylakoid membrane. Its function is as follows. May help in the organization of the PsaL subunit. In Pyropia yezoensis (Susabi-nori), this protein is Photosystem I reaction center subunit VIII.